Here is a 354-residue protein sequence, read N- to C-terminus: Alanine racemase (354 aa).

Lysine 33 functions as the Proton acceptor; specific for D-alanine in the catalytic mechanism. Residue lysine 33 is modified to N6-(pyridoxal phosphate)lysine. Residue arginine 127 participates in substrate binding. The Proton acceptor; specific for L-alanine role is filled by tyrosine 251. Substrate is bound at residue methionine 299.

Belongs to the alanine racemase family. Requires pyridoxal 5'-phosphate as cofactor.

It carries out the reaction L-alanine = D-alanine. Its pathway is amino-acid biosynthesis; D-alanine biosynthesis; D-alanine from L-alanine: step 1/1. Functionally, catalyzes the interconversion of L-alanine and D-alanine. May also act on other amino acids. This chain is Alanine racemase (alr), found in Fusobacterium nucleatum subsp. nucleatum (strain ATCC 25586 / DSM 15643 / BCRC 10681 / CIP 101130 / JCM 8532 / KCTC 2640 / LMG 13131 / VPI 4355).